Consider the following 332-residue polypeptide: 2,3-diketo-L-gulonate reductase (332 aa).

The active-site Proton donor is histidine 44. Residues isoleucine 168 to serine 174, tryptophan 224 to lysine 225, and glycine 304 to glutamate 306 each bind NAD(+).

The protein belongs to the LDH2/MDH2 oxidoreductase family. DlgD subfamily. Homodimer.

Its subcellular location is the cytoplasm. The enzyme catalyses 3-dehydro-L-gulonate + NAD(+) = 2,3-dioxo-L-gulonate + NADH + H(+). It catalyses the reaction 3-dehydro-L-gulonate + NADP(+) = 2,3-dioxo-L-gulonate + NADPH + H(+). In terms of biological role, catalyzes the reduction of 2,3-diketo-L-gulonate in the presence of NADH, to form 3-keto-L-gulonate. The sequence is that of 2,3-diketo-L-gulonate reductase from Escherichia coli O17:K52:H18 (strain UMN026 / ExPEC).